The primary structure comprises 180 residues: Large ribosomal subunit protein uL5 (180 aa).

This sequence belongs to the universal ribosomal protein uL5 family. Part of the 50S ribosomal subunit; part of the 5S rRNA/L5/L18/L25 subcomplex. Contacts the 5S rRNA and the P site tRNA. Forms a bridge to the 30S subunit in the 70S ribosome.

Functionally, this is one of the proteins that bind and probably mediate the attachment of the 5S RNA into the large ribosomal subunit, where it forms part of the central protuberance. In the 70S ribosome it contacts protein S13 of the 30S subunit (bridge B1b), connecting the 2 subunits; this bridge is implicated in subunit movement. Contacts the P site tRNA; the 5S rRNA and some of its associated proteins might help stabilize positioning of ribosome-bound tRNAs. The chain is Large ribosomal subunit protein uL5 from Gloeothece citriformis (strain PCC 7424) (Cyanothece sp. (strain PCC 7424)).